The chain runs to 247 residues: LOB domain-containing protein 38 (247 aa).

An LOB domain is found at 1 to 107; the sequence is MSCNGCRVLR…VETVLRGGSL (107 aa). Low complexity predominate over residues 157–170; sequence FSSSRSRSRSTASP. A disordered region spans residues 157–184; that stretch reads FSSSRSRSRSTASPPKRKRLSSEQQPSS.

It belongs to the LOB domain-containing protein family. As to expression, expressed in young shoots, roots, stems, leaves and flowers.

In Arabidopsis thaliana (Mouse-ear cress), this protein is LOB domain-containing protein 38 (LBD38).